The chain runs to 299 residues: Delta-9 desaturase-like 3 protein (299 aa).

The next 2 membrane-spanning stretches (helical) occupy residues 38 to 57 (AVGA…TWEA) and 58 to 76 (FRFA…TFSY). The short motif at 77–82 (HRNLTH) is the Histidine box-1 element. Residues 114–118 (HRFHH) carry the Histidine box-2 motif. The next 2 membrane-spanning stretches (helical) occupy residues 174 to 194 (IGLH…LPYL) and 198 to 218 (VGVG…ACHI). Positions 246 to 250 (HNNHH) match the Histidine box-3 motif. A helical transmembrane segment spans residues 262-282 (WYQVDLTWYLIWFFQVLGLAT).

Belongs to the fatty acid desaturase type 1 family. Fe cation is required as a cofactor.

The protein resides in the endoplasmic reticulum membrane. The protein operates within lipid metabolism; polyunsaturated fatty acid biosynthesis. The polypeptide is Delta-9 desaturase-like 3 protein (Arabidopsis thaliana (Mouse-ear cress)).